Consider the following 275-residue polypeptide: 2,3,4,5-tetrahydropyridine-2,6-dicarboxylate N-succinyltransferase (275 aa).

Substrate contacts are provided by Arg-105 and Asp-142.

It belongs to the transferase hexapeptide repeat family. As to quaternary structure, homotrimer.

The protein resides in the cytoplasm. The enzyme catalyses (S)-2,3,4,5-tetrahydrodipicolinate + succinyl-CoA + H2O = (S)-2-succinylamino-6-oxoheptanedioate + CoA. It participates in amino-acid biosynthesis; L-lysine biosynthesis via DAP pathway; LL-2,6-diaminopimelate from (S)-tetrahydrodipicolinate (succinylase route): step 1/3. In Pectobacterium atrosepticum (strain SCRI 1043 / ATCC BAA-672) (Erwinia carotovora subsp. atroseptica), this protein is 2,3,4,5-tetrahydropyridine-2,6-dicarboxylate N-succinyltransferase.